The chain runs to 381 residues: Arrestin homolog (381 aa).

Belongs to the arrestin family.

This chain is Arrestin homolog, found in Heliothis virescens (Tobacco budworm moth).